The sequence spans 490 residues: ATP synthase subunit beta (490 aa).

Position 173–180 (173–180) interacts with ATP; that stretch reads GGAGVGKT.

Belongs to the ATPase alpha/beta chains family. F-type ATPases have 2 components, CF(1) - the catalytic core - and CF(0) - the membrane proton channel. CF(1) has five subunits: alpha(3), beta(3), gamma(1), delta(1), epsilon(1). CF(0) has three main subunits: a(1), b(2) and c(9-12). The alpha and beta chains form an alternating ring which encloses part of the gamma chain. CF(1) is attached to CF(0) by a central stalk formed by the gamma and epsilon chains, while a peripheral stalk is formed by the delta and b chains.

It localises to the cell membrane. It carries out the reaction ATP + H2O + 4 H(+)(in) = ADP + phosphate + 5 H(+)(out). Functionally, produces ATP from ADP in the presence of a proton gradient across the membrane. The catalytic sites are hosted primarily by the beta subunits. This Bifidobacterium longum subsp. infantis (strain ATCC 15697 / DSM 20088 / JCM 1222 / NCTC 11817 / S12) protein is ATP synthase subunit beta.